The following is an 815-amino-acid chain: Leucine--tRNA ligase (815 aa).

A 'HIGH' region motif is present at residues 41 to 51; that stretch reads PYPSGTLHVGH. The short motif at 576-580 is the 'KMSKS' region element; it reads KMSKS. Residue Lys579 participates in ATP binding.

The protein belongs to the class-I aminoacyl-tRNA synthetase family.

It is found in the cytoplasm. The catalysed reaction is tRNA(Leu) + L-leucine + ATP = L-leucyl-tRNA(Leu) + AMP + diphosphate. The chain is Leucine--tRNA ligase from Pseudothermotoga lettingae (strain ATCC BAA-301 / DSM 14385 / NBRC 107922 / TMO) (Thermotoga lettingae).